A 363-amino-acid chain; its full sequence is Isopentenyl-diphosphate delta-isomerase (363 aa).

6–7 (RK) is a binding site for substrate. FMN-binding positions include 64-66 (AMT), Ser-94, and Asn-123. Gln-153 lines the substrate pocket. Residue Glu-154 coordinates Mg(2+). Residues Lys-185, Ser-210, Thr-215, 259 to 261 (GVR), and 280 to 281 (SA) each bind FMN.

Belongs to the IPP isomerase type 2 family. As to quaternary structure, homooctamer. Dimer of tetramers. Mg(2+) serves as cofactor. It depends on FMN as a cofactor. The cofactor is NADPH.

It localises to the cytoplasm. The enzyme catalyses isopentenyl diphosphate = dimethylallyl diphosphate. Involved in the biosynthesis of isoprenoids. Catalyzes the 1,3-allylic rearrangement of the homoallylic substrate isopentenyl (IPP) to its allylic isomer, dimethylallyl diphosphate (DMAPP). This is Isopentenyl-diphosphate delta-isomerase from Streptomyces sp. (strain CL190).